The chain runs to 408 residues: Ribulose bisphosphate carboxylase/oxygenase activase, chloroplastic (408 aa).

Residues Met1–Val32 constitute a chloroplast transit peptide. Gly138–Thr145 contributes to the ATP binding site.

It belongs to the RuBisCO activase family. Monomer.

The protein resides in the plastid. It localises to the chloroplast stroma. Its function is as follows. Activation of RuBisCO (ribulose-1,5-bisphosphate carboxylase/oxygenase; EC 4.1.1.39) involves the ATP-dependent carboxylation of the epsilon-amino group of lysine leading to a carbamate structure. In Chlamydomonas reinhardtii (Chlamydomonas smithii), this protein is Ribulose bisphosphate carboxylase/oxygenase activase, chloroplastic.